Consider the following 358-residue polypeptide: tRNA-specific 2-thiouridylase MnmA (358 aa).

Residues 6-13 and methionine 32 contribute to the ATP site; that span reads ALSGGVDS. The Nucleophile role is filled by cysteine 103. Residues cysteine 103 and cysteine 201 are joined by a disulfide bond. Position 127 (glycine 127) interacts with ATP. The interaction with tRNA stretch occupies residues 151–153; the sequence is KDQ. The active-site Cysteine persulfide intermediate is cysteine 201.

It belongs to the MnmA/TRMU family.

The protein localises to the cytoplasm. It catalyses the reaction S-sulfanyl-L-cysteinyl-[protein] + uridine(34) in tRNA + AH2 + ATP = 2-thiouridine(34) in tRNA + L-cysteinyl-[protein] + A + AMP + diphosphate + H(+). Functionally, catalyzes the 2-thiolation of uridine at the wobble position (U34) of tRNA, leading to the formation of s(2)U34. The polypeptide is tRNA-specific 2-thiouridylase MnmA (Thermotoga petrophila (strain ATCC BAA-488 / DSM 13995 / JCM 10881 / RKU-1)).